We begin with the raw amino-acid sequence, 212 residues long: Suppressor of cytokine signaling 1 (212 aa).

The interval 1-55 (MVARNQVAADNAISPAAEPRRRSEPSSSSSSSSPAAPVRPRPCPAVPAPAPGDTH) is disordered. Residues 25-36 (PSSSSSSSSPAA) show a composition bias toward low complexity. Residues 37 to 50 (PVRPRPCPAVPAPA) show a composition bias toward pro residues. Residues 56–67 (FRTFRSHSDYRR) form a kinase inhibitory region (KIR) region. The extended SH2 subdomain (ESS) stretch occupies residues 68-79 (ITRTSALLDACG). In terms of domain architecture, SH2 spans 80-175 (FYWGPLSVHG…PLRQRRVRPL (96 aa)). The 50-residue stretch at 162–211 (MLGAPLRQRRVRPLQELCRQRIVAAVGRENLARIPLNPVLRDYLSSFPFQ) folds into the SOCS box domain. Positions 174–183 (PLQELCRQRI) are interaction with Elongin BC complex.

Belongs to the SOCS1 family. In terms of assembly, interacts with multiple activated proteins of the tyrosine kinase signaling pathway including JAK family kinases, TEC, KIT, GRB2 and VAV. Binding to JAKs is mediated through the KIR and SH2 domain to a phosphorylated tyrosine residue within the JAK JH1 domain. Binds the SH3 domain of GRB2 via diproline determinants in the N-terminus, and the N-terminal regulatory domain of VAV. Interacts with the Elongin BC complex (ELOB and ELOC). Component of an ECS CBC(SOCS1) E3 ubiquitin-protein ligase complex which contains Elongin BC, CUL5, RBX1 and SOCS1. Interacts (via SH2 domain and SOCS box) with TRIM8. Interacts with CUL2. Interacts with AXL and FGFR3. Interacts with INSR. Interacts with TRIM8. Interacts with DCUN1D1. Interacts with IFNGR1. In terms of tissue distribution, high expression in thymus. Lower expression in lung and spleen. Expressed in both Th1 and Th2 cells.

It is found in the nucleus. It localises to the cytoplasmic vesicle. The protein operates within protein modification; protein ubiquitination. Its function is as follows. Essential negative regulator of type I and type II interferon (IFN) signaling, as well as that of other cytokines, including IL2, IL4, IL6 and leukemia inhibitory factor (LIF). Downregulates cytokine signaling by inhibiting the JAK/STAT signaling pathway. Acts by binding to JAK proteins and to IFNGR1 and inhibiting their kinase activity. In vitro, suppresses Tec protein-tyrosine activity. Regulates IFN-gamma (IFNG)-mediated sensory neuron survival. Probable substrate recognition component of an ECS (Elongin BC-CUL2/5-SOCS-box protein) E3 ubiquitin ligase complex which mediates the ubiquitination and subsequent proteasomal degradation of target proteins. The polypeptide is Suppressor of cytokine signaling 1 (Mus musculus (Mouse)).